Reading from the N-terminus, the 597-residue chain is Period protein homolog lin-42 (597 aa).

Positions Met1 to Ser44 are disordered. Positions Leu155–Asn223 constitute a PAS domain. Disordered stretches follow at residues Pro313–Gly335, Lys418–Thr450, Asp473–Gly509, and Asp555–Asn597. Residues Ser425–Tyr438 are compositionally biased toward basic and acidic residues. Residues Ile487–Tyr497 show a composition bias toward polar residues. Residues Gly561–Pro577 are compositionally biased toward low complexity.

The protein resides in the nucleus. The protein localises to the cytoplasm. Functionally, transcriptional repressor which interacts with the promoter region of target genes. Has a specific role in developmental timing where it regulates temporal expression of a number of miRNAs and mRNAs. Controls temporal cell fate transition during embryonic and early larval development by restricting the expression of specific miRNAs, including let-7, miR-48, lin-4, miR-35 and miR-58. Restricts the accumulation of lin-29 in the hypodermis to the larval L4 stage, thus controlling terminal differentiation of seam cells. Has a role in the miRNA-mediated specification of asymmetric gene expression patterns in gustatory neurons. May also regulate genes involved in other biological processes including transport, small molecule metabolism, and growth. Inhibits dauer formation, by antagonizing daf-12. Its function is as follows. Specifically required for maintaining the timing of larval development and molting cycle rhythms. The polypeptide is Period protein homolog lin-42 (Caenorhabditis elegans).